The chain runs to 376 residues: GTPase Obg (376 aa).

The 160-residue stretch at 2 to 161 folds into the Obg domain; sequence ASFVDEVLIR…RVVHVELRIV (160 aa). Residues 162-328 enclose the OBG-type G domain; that stretch reads ADVGFVGLPN…LQEAFVRLSD (167 aa). Residues 168-175, 193-197, 215-218, 282-285, and 309-311 each bind GTP; these read GLPNAGKS, FTTRI, DVPG, TKLD, and SVH. The Mg(2+) site is built by S175 and T195.

Belongs to the TRAFAC class OBG-HflX-like GTPase superfamily. OBG GTPase family. As to quaternary structure, monomer. It depends on Mg(2+) as a cofactor.

The protein localises to the cytoplasm. In terms of biological role, an essential GTPase which binds GTP, GDP and possibly (p)ppGpp with moderate affinity, with high nucleotide exchange rates and a fairly low GTP hydrolysis rate. Plays a role in control of the cell cycle, stress response, ribosome biogenesis and in those bacteria that undergo differentiation, in morphogenesis control. In Treponema pallidum (strain Nichols), this protein is GTPase Obg.